The chain runs to 771 residues: Kinase suppressor of Ras A (771 aa).

Residues 152 to 169 (SRTSSGSTDEPSGQSTPA) show a composition bias toward polar residues. The interval 152 to 172 (SRTSSGSTDEPSGQSTPAIVT) is disordered. The Phorbol-ester/DAG-type zinc finger occupies 215 to 269 (PHKWHRSTKFRFSGDAVCHFCQRPLGFGFLNAWEKCRSCKWKVHTQCKGRVGDSC). Disordered regions lie at residues 290–339 (GMWK…ISGN) and 414–433 (DSTG…EAVD). Low complexity predominate over residues 318-331 (SSSSTNSSAPSTPA). Positions 477 to 748 (DKQAPIIGRG…TDINLKLTAL (272 aa)) constitute a Protein kinase domain. Residues 483-491 (IGRGRFGKV) and Lys-503 contribute to the ATP site. The active-site Proton acceptor is the Asp-600.

The protein belongs to the protein kinase superfamily. TKL Ser/Thr protein kinase family. Interacts with mek-2. It depends on Mg(2+) as a cofactor.

The catalysed reaction is L-seryl-[protein] + ATP = O-phospho-L-seryl-[protein] + ADP + H(+). It carries out the reaction L-threonyl-[protein] + ATP = O-phospho-L-threonyl-[protein] + ADP + H(+). Functionally, serine/threonine-protein kinase which positively regulates Ras-mediated signaling probably acting at the level of let-60/ras or/and lin-45/raf. Involved in sex myoblast migration. Plays a role in responses to M.nematophilum-mediated bacterial infection by promoting tail swelling and preventing constipation. Functions redundantly with ksr-2 in the Ras-mediated regulation of larval survival, the development of excretory canal and in mpk-1 phosphorylation in somatic cells. In addition, involved in determining vulval precursor cell fate during vulval induction independently of its kinase activity. Plays a role in egg-laying. The polypeptide is Kinase suppressor of Ras A (Caenorhabditis elegans).